We begin with the raw amino-acid sequence, 326 residues long: Ribosome biogenesis protein BRX1 homolog (326 aa).

Residues 1–17 (MVKPSKILEKIKKRTEP) show a composition bias toward basic and acidic residues. The disordered stretch occupies residues 1-66 (MVKPSKILEK…EENKNIEENK (66 aa)). Acidic residues predominate over residues 22–57 (VVEEESDEEIIEQEGSEEEEEIVEEESEEEEEEVEE). Residues 75–268 (KRVLFTSTRG…IDKIFSDGFG (194 aa)) form the Brix domain.

The protein belongs to the BRX1 family.

The protein localises to the nucleus. It localises to the nucleolus. Its function is as follows. Required for biogenesis of the 60S ribosomal subunit. The chain is Ribosome biogenesis protein BRX1 homolog (bxdc2) from Dictyostelium discoideum (Social amoeba).